Reading from the N-terminus, the 508-residue chain is Photosystem II CP47 reaction center protein (508 aa).

6 helical membrane-spanning segments follow: residues 21–36, 101–115, 140–156, 203–218, 237–252, and 457–472; these read SVHI…WAGS, IVFS…IWHW, GIHL…FGAF, IAAG…FHLS, VLSS…AFIV, and TFAL…HGAR.

The protein belongs to the PsbB/PsbC family. PsbB subfamily. PSII is composed of 1 copy each of membrane proteins PsbA, PsbB, PsbC, PsbD, PsbE, PsbF, PsbH, PsbI, PsbJ, PsbK, PsbL, PsbM, PsbT, PsbX, PsbY, PsbZ, Psb30/Ycf12, at least 3 peripheral proteins of the oxygen-evolving complex and a large number of cofactors. It forms dimeric complexes. Requires Binds multiple chlorophylls. PSII binds additional chlorophylls, carotenoids and specific lipids. as cofactor.

It localises to the plastid. The protein localises to the chloroplast thylakoid membrane. In terms of biological role, one of the components of the core complex of photosystem II (PSII). It binds chlorophyll and helps catalyze the primary light-induced photochemical processes of PSII. PSII is a light-driven water:plastoquinone oxidoreductase, using light energy to abstract electrons from H(2)O, generating O(2) and a proton gradient subsequently used for ATP formation. The polypeptide is Photosystem II CP47 reaction center protein (Pinus thunbergii (Japanese black pine)).